A 960-amino-acid chain; its full sequence is Putative helicase L207/L206 (960 aa).

The tract at residues 1-32 is disordered; that stretch reads MTSKTENKKSVSSKTGRTTNNSTNKKTTEKSV. Residues 12-25 show a composition bias toward low complexity; sequence SSKTGRTTNNSTNK. Residues 646–807 form the SF3 helicase domain; that stretch reads SMREYILTLL…FIKHSEATKK (162 aa).

The polypeptide is Putative helicase L207/L206 (Acanthamoeba polyphaga mimivirus (APMV)).